A 132-amino-acid chain; its full sequence is Histone H2A.2 (132 aa).

It belongs to the histone H2A family. In terms of assembly, the nucleosome is a histone octamer containing two molecules each of H2A, H2B, H3 and H4 assembled in one H3-H4 heterotetramer and two H2A-H2B heterodimers. The octamer wraps approximately 147 bp of DNA.

The protein localises to the nucleus. It is found in the chromosome. Functionally, core component of nucleosome. Nucleosomes wrap and compact DNA into chromatin, limiting DNA accessibility to the cellular machineries which require DNA as a template. Histones thereby play a central role in transcription regulation, DNA repair, DNA replication and chromosomal stability. DNA accessibility is regulated via a complex set of post-translational modifications of histones, also called histone code, and nucleosome remodeling. The sequence is that of Histone H2A.2 from Leishmania infantum.